Reading from the N-terminus, the 354-residue chain is tRNA N6-adenosine threonylcarbamoyltransferase (354 aa).

2 residues coordinate Fe cation: H115 and H119. Residues 138-142, D171, G184, and N276 contribute to the substrate site; that span reads LVSGG. D304 lines the Fe cation pocket.

Belongs to the KAE1 / TsaD family. The cofactor is Fe(2+).

The protein localises to the cytoplasm. The enzyme catalyses L-threonylcarbamoyladenylate + adenosine(37) in tRNA = N(6)-L-threonylcarbamoyladenosine(37) in tRNA + AMP + H(+). Functionally, required for the formation of a threonylcarbamoyl group on adenosine at position 37 (t(6)A37) in tRNAs that read codons beginning with adenine. Is involved in the transfer of the threonylcarbamoyl moiety of threonylcarbamoyl-AMP (TC-AMP) to the N6 group of A37, together with TsaE and TsaB. TsaD likely plays a direct catalytic role in this reaction. The chain is tRNA N6-adenosine threonylcarbamoyltransferase from Xanthomonas campestris pv. campestris (strain 8004).